The sequence spans 360 residues: DNA replication and repair protein RecF (360 aa).

30–37 (GQNGSGKT) provides a ligand contact to ATP.

The protein belongs to the RecF family.

It localises to the cytoplasm. Functionally, the RecF protein is involved in DNA metabolism; it is required for DNA replication and normal SOS inducibility. RecF binds preferentially to single-stranded, linear DNA. It also seems to bind ATP. The chain is DNA replication and repair protein RecF from Shewanella baltica (strain OS185).